The primary structure comprises 85 residues: BmK AGP-SYPU2 (85 aa).

An N-terminal signal peptide occupies residues 1-19 (MNYMVIISLALLVMTGVES). The LCN-type CS-alpha/beta domain maps to 21–83 (KDGYIADDRN…ARIMKPGRCN (63 aa)). 4 cysteine pairs are disulfide-bonded: cysteine 31–cysteine 82, cysteine 35–cysteine 55, cysteine 41–cysteine 65, and cysteine 45–cysteine 67.

It belongs to the long (4 C-C) scorpion toxin superfamily. Sodium channel inhibitor family. Alpha subfamily. As to expression, expressed by the venom gland.

It is found in the secreted. Functionally, alpha toxins bind voltage-independently at site-3 of sodium channels (Nav) and inhibit the inactivation of the activated channels, thereby blocking neuronal transmission. Shows analgesic activity when intraperitoneally injected into mice. The polypeptide is BmK AGP-SYPU2 (Olivierus martensii (Manchurian scorpion)).